The sequence spans 243 residues: 26S proteasome regulatory subunit rpn10 (243 aa).

The VWFA domain maps to alanine 5–serine 185. In terms of domain architecture, UIM spans asparagine 205 to arginine 224. The disordered stretch occupies residues alanine 223–glutamate 243. Residues serine 232 to glutamate 243 are compositionally biased toward basic and acidic residues.

This sequence belongs to the proteasome subunit S5A family. As to quaternary structure, the 26S proteasome is composed of a core protease, known as the 20S proteasome, capped at one or both ends by the 19S regulatory complex (RC). The RC is composed of at least 18 different subunits in two subcomplexes, the base and the lid, which form the portions proximal and distal to the 20S proteolytic core, respectively. Interacts with uch2.

The protein localises to the nucleus. Functionally, protects ubiquitin chains against dissambly by deubiquitinating enzymes thereby promoting protein degradation. This chain is 26S proteasome regulatory subunit rpn10 (rpn10), found in Schizosaccharomyces pombe (strain 972 / ATCC 24843) (Fission yeast).